A 418-amino-acid chain; its full sequence is MSLSNKLSIEDVDLKGKRVLIRVDFNVPLDAEKKVTNPQRIAGAIPTIKYALDHGAKAVVLMSHLGRPDGKPNPKYSLKPVVPELEKLLGKKVTFAPDCVGPEVEEIVNKADNGEVILLENLRFHIEEEGKGTDAEGNKVKADKAKVEEFRKNLTKLGDVYINDAFGTAHRAHSSMVGIDLPVKAAGFLMKKELQYFAKVLESPQRPFLSILGGAKVSDKIQLIDNLLDKVNTLIVCGGMAFTFKKTLQNMPIGNSLFDEAGAKIVPDLVKKAEKNNVKLVLPVDFTIADKFDKDANTGYATDKDGIPDGWMGLDCGEESVKLFTQAINESQTILWNGPAGVFEFDKFAKGTKATLDACVKAAEEGRTVIIGGGDTATVAAKYGVEDKLSHVSTGGGASLELLEGKALPGVVALSERQ.

Positions 23, 24, 25, 26, 39, 40, 63, 64, 66, 67, 122, 123, 170, and 171 each coordinate (2R)-3-phosphoglycerate. An ADP-binding site is contributed by Gly214. Gly214 contacts CDP. AMP-binding residues include Ala215 and Lys216. Ala215 provides a ligand contact to ATP. Ala215 contributes to the Mg(2+) binding site. Asp219 lines the CDP pocket. Asp219 contributes to the Mg(2+) binding site. AMP is bound at residue Lys220. Lys220 serves as a coordination point for ATP. ADP is bound at residue Gly238. Gly238 is a CDP binding site. AMP contacts are provided by Gly239 and Gly313. Residues Gly239 and Gly313 each contribute to the ATP site. Residues Gly338, Ala340, and Phe343 each contribute to the CDP site. Phe343 provides a ligand contact to ADP. Glu344 serves as a coordination point for AMP. ATP-binding residues include Glu344, Asp375, and Thr376. Asp375 provides a ligand contact to Mg(2+).

This sequence belongs to the phosphoglycerate kinase family. As to quaternary structure, monomer. Mg(2+) is required as a cofactor.

The protein localises to the cytoplasm. The protein resides in the mitochondrion. The enzyme catalyses (2R)-3-phosphoglycerate + ATP = (2R)-3-phospho-glyceroyl phosphate + ADP. Its pathway is carbohydrate degradation; glycolysis; pyruvate from D-glyceraldehyde 3-phosphate: step 2/5. Its function is as follows. Catalyzes one of the two ATP producing reactions in the glycolytic pathway via the reversible conversion of 1,3-diphosphoglycerate to 3-phosphoglycerate. Both L- and D- forms of purine and pyrimidine nucleotides can be used as substrates, but the activity is much lower on pyrimidines. Negatively regulates the biosynthesis of acetyl-CoA from pyruvate in the mitochondrion. The polypeptide is Phosphoglycerate kinase (pgk-1) (Neurospora crassa (strain ATCC 24698 / 74-OR23-1A / CBS 708.71 / DSM 1257 / FGSC 987)).